The chain runs to 187 residues: Probable DNA-directed RNA polymerase subunit delta (187 aa).

One can recognise an HTH HARE-type domain in the interval L14–W81. Residues E96–D187 are disordered. 2 stretches are compositionally biased toward acidic residues: residues I117–D149 and E157–D187.

The protein belongs to the RpoE family. As to quaternary structure, RNAP is composed of a core of 2 alpha, a beta and a beta' subunits. The core is associated with a delta subunit and one of several sigma factors.

Participates in both the initiation and recycling phases of transcription. In the presence of the delta subunit, RNAP displays an increased specificity of transcription, a decreased affinity for nucleic acids, and an increased efficiency of RNA synthesis because of enhanced recycling. The chain is Probable DNA-directed RNA polymerase subunit delta from Lactococcus lactis subsp. cremoris (strain SK11).